Reading from the N-terminus, the 141-residue chain is Large ribosomal subunit protein uL11 (141 aa).

The protein belongs to the universal ribosomal protein uL11 family. In terms of assembly, part of the ribosomal stalk of the 50S ribosomal subunit. Interacts with L10 and the large rRNA to form the base of the stalk. L10 forms an elongated spine to which L12 dimers bind in a sequential fashion forming a multimeric L10(L12)X complex. One or more lysine residues are methylated.

Functionally, forms part of the ribosomal stalk which helps the ribosome interact with GTP-bound translation factors. The protein is Large ribosomal subunit protein uL11 of Latilactobacillus sakei subsp. sakei (strain 23K) (Lactobacillus sakei subsp. sakei).